Consider the following 238-residue polypeptide: Purine nucleoside phosphorylase DeoD-type (238 aa).

Residue His4 coordinates a purine D-ribonucleoside. Phosphate is bound by residues Gly20, Arg24, Arg43, and 87–90 (RVGS). Residues 179–181 (EME) and 203–204 (SD) contribute to the a purine D-ribonucleoside site. Asp204 acts as the Proton donor in catalysis.

This sequence belongs to the PNP/UDP phosphorylase family. Homohexamer; trimer of homodimers.

It carries out the reaction a purine D-ribonucleoside + phosphate = a purine nucleobase + alpha-D-ribose 1-phosphate. The enzyme catalyses a purine 2'-deoxy-D-ribonucleoside + phosphate = a purine nucleobase + 2-deoxy-alpha-D-ribose 1-phosphate. Catalyzes the reversible phosphorolytic breakdown of the N-glycosidic bond in the beta-(deoxy)ribonucleoside molecules, with the formation of the corresponding free purine bases and pentose-1-phosphate. The chain is Purine nucleoside phosphorylase DeoD-type from Haemophilus ducreyi (strain 35000HP / ATCC 700724).